Here is a 1063-residue protein sequence, read N- to C-terminus: Presequence protease, mitochondrial (1063 aa).

Residues 1–33 (MLRLANRVSRKDSGNLGIAQLKKRLLATSGVSQ) constitute a mitochondrion transit peptide. His105 is a Zn(2+) binding site. Glu108 (proton acceptor) is an active-site residue. His109 provides a ligand contact to Zn(2+). The active site involves Glu181. Glu206 serves as a coordination point for Zn(2+).

This sequence belongs to the peptidase M16 family. PreP subfamily. As to quaternary structure, monomer and homodimer; homodimerization is induced by binding of the substrate. It depends on Zn(2+) as a cofactor.

It is found in the mitochondrion intermembrane space. The protein resides in the mitochondrion matrix. Its function is as follows. Degrades mitochondrial transit peptides after their cleavage in the intermembrane space or in the matrix, and presequence peptides; clearance of these peptides is required to keep the presequence processing machinery running. Preferentially cleaves the N-terminal side of paired basic amino acid residues. Also degrades other unstructured peptides. May function as an ATP-dependent peptidase as opposed to a metalloendopeptidase. The sequence is that of Presequence protease, mitochondrial (CYM1) from Debaryomyces hansenii (strain ATCC 36239 / CBS 767 / BCRC 21394 / JCM 1990 / NBRC 0083 / IGC 2968) (Yeast).